A 120-amino-acid chain; its full sequence is uncharacterized protein (120 aa).

Belongs to the HesB/IscA family.

This is an uncharacterized protein from Bacillus subtilis (strain 168).